The chain runs to 68 residues: U4-agatoxin-Ao1a (68 aa).

The first 25 residues, 1–25 (MKKSTVIVLSLAAFVLLSVMQFSAA), serve as a signal peptide directing secretion. Residues 26-36 (EDIKMEVEEQR) constitute a propeptide that is removed on maturation. Disulfide bonds link C39–C52, C46–C57, C51–C66, and C59–C64.

This sequence belongs to the neurotoxin 33 family. In terms of tissue distribution, expressed by the venom gland.

It localises to the secreted. The protein is U4-agatoxin-Ao1a of Agelena orientalis (Funnel-web spider).